We begin with the raw amino-acid sequence, 138 residues long: Protein NrdI (138 aa).

The protein belongs to the NrdI family.

Functionally, probably involved in ribonucleotide reductase function. The protein is Protein NrdI of Beutenbergia cavernae (strain ATCC BAA-8 / DSM 12333 / CCUG 43141 / JCM 11478 / NBRC 16432 / NCIMB 13614 / HKI 0122).